The sequence spans 194 residues: Imidazoleglycerol-phosphate dehydratase (194 aa).

It belongs to the imidazoleglycerol-phosphate dehydratase family.

The protein resides in the cytoplasm. It catalyses the reaction D-erythro-1-(imidazol-4-yl)glycerol 3-phosphate = 3-(imidazol-4-yl)-2-oxopropyl phosphate + H2O. The protein operates within amino-acid biosynthesis; L-histidine biosynthesis; L-histidine from 5-phospho-alpha-D-ribose 1-diphosphate: step 6/9. The protein is Imidazoleglycerol-phosphate dehydratase of Listeria welshimeri serovar 6b (strain ATCC 35897 / DSM 20650 / CCUG 15529 / CIP 8149 / NCTC 11857 / SLCC 5334 / V8).